The following is a 500-amino-acid chain: Cytochrome P450 71D7 (500 aa).

Cysteine 441 contributes to the heme binding site.

Belongs to the cytochrome P450 family. Requires heme as cofactor.

The protein is Cytochrome P450 71D7 (CYP71D7) of Solanum chacoense (Chaco potato).